A 507-amino-acid polypeptide reads, in one-letter code: Subtilisin-like protease 1 (507 aa).

The N-terminal stretch at 1-19 (MGVFRFISISLAAVSAANA) is a signal peptide. Positions 20 to 116 (AQILSMPHAQ…VEPDTIISVN (97 aa)) are excised as a propeptide. Positions 34 to 113 (SYIVMMKDDT…VMFVEPDTII (80 aa)) constitute an Inhibitor I9 domain. Residues 126–400 (SWGLARISNS…NVLISNGGAK (275 aa)) enclose the Peptidase S8 domain. Active-site charge relay system residues include aspartate 158 and histidine 190. A disordered region spans residues 175–198 (GSNQVNDGDDRDGSGHGTHTSGTM). Residue asparagine 251 is glycosylated (N-linked (GlcNAc...) asparagine). A compositionally biased stretch (polar residues) spans 282-294 (NENQDARSSSPAS). A disordered region spans residues 282–312 (NENQDARSSSPASEPSVCTVGSSAEDDSRSS). The active-site Charge relay system is the serine 345. Residues 378 to 394 (SSSITDVGPGTPTNVLI) show a composition bias toward polar residues. Residues 378-486 (SSSITDVGPG…YPGGDNFDFD (109 aa)) form a disordered region. Composition is skewed to pro residues over residues 405-428 (KPAP…PSQP) and 438-449 (EPFPGEPFPGEP). Over residues 450-461 (FPGESSPGESAP) the composition is skewed to low complexity. The span at 462 to 476 (APAPMPPSPQHPHTP) shows a compositional bias: pro residues.

This sequence belongs to the peptidase S8 family.

It localises to the secreted. Secreted subtilisin-like serine protease with keratinolytic activity that contributes to pathogenicity. The sequence is that of Subtilisin-like protease 1 (SUB1) from Trichophyton tonsurans (Scalp ringworm fungus).